Here is a 312-residue protein sequence, read N- to C-terminus: Retinol dehydrogenase 8 (312 aa).

9–18 (LISGCSSGIG) lines the NADP(+) pocket. Transmembrane regions (helical) follow at residues 87–107 (VLVN…SLAA), 138–158 (IVVV…VYAA), and 170–190 (LAVQ…GPVV). Position 143 (S143) interacts with substrate. Y156 (proton acceptor) is an active-site residue.

It belongs to the short-chain dehydrogenases/reductases (SDR) family. Detected in photoreceptor outer segments in the retina (at protein level).

The protein resides in the membrane. The enzyme catalyses all-trans-retinol + NADP(+) = all-trans-retinal + NADPH + H(+). Retinol dehydrogenase with a clear preference for NADP. Converts all-trans-retinal to all-trans-retinol. May play a role in the regeneration of visual pigment at high light intensity. This is Retinol dehydrogenase 8 (RDH8) from Bos taurus (Bovine).